The following is a 245-amino-acid chain: 23S rRNA (guanosine-2'-O-)-methyltransferase RlmB (245 aa).

S-adenosyl-L-methionine is bound by residues G197, I217, and L226.

This sequence belongs to the class IV-like SAM-binding methyltransferase superfamily. RNA methyltransferase TrmH family. RlmB subfamily.

It is found in the cytoplasm. The catalysed reaction is guanosine(2251) in 23S rRNA + S-adenosyl-L-methionine = 2'-O-methylguanosine(2251) in 23S rRNA + S-adenosyl-L-homocysteine + H(+). Specifically methylates the ribose of guanosine 2251 in 23S rRNA. This Bordetella parapertussis (strain 12822 / ATCC BAA-587 / NCTC 13253) protein is 23S rRNA (guanosine-2'-O-)-methyltransferase RlmB.